Reading from the N-terminus, the 80-residue chain is Waprin-Phi3 (80 aa).

The N-terminal stretch at 1–22 (MKPWILLLLAGLLILSTQLTTA) is a signal peptide. The WAP domain maps to 31 to 78 (PKVKPGECPKVKIPPDYPCNQYCVWDFDCEGNKKCCPVGCAKECFPPG). Cystine bridges form between C38/C66, C49/C70, C53/C65, and C59/C74.

Belongs to the venom waprin family. As to expression, expressed by the venom gland.

It localises to the secreted. Damages membranes of susceptible bacteria. Has no hemolytic activity. Not toxic to mice. Does not inhibit the proteinases elastase and cathepsin G. This Philodryas olfersii (Green snake) protein is Waprin-Phi3.